The following is a 350-amino-acid chain: Ribosome production factor 2 homolog (350 aa).

The Brix domain maps to 28-266; the sequence is KTCLFLRGTT…LGRMREPDPA (239 aa). The span at 192–202 shows a compositional bias: polar residues; sequence PTSSTSTNNDG. 2 disordered regions span residues 192–219 and 301–350; these read PTSS…SIDP and MGKT…KVKG.

It belongs to the RPF2 family. As to quaternary structure, component of a hexameric 5S RNP precursor complex, composed of 5S RNA, RRS1, RPF2, RPL5, RPL11 and SYO1; this complex acts as a precursor for ribosome assembly.

It is found in the nucleus. Its subcellular location is the nucleolus. Involved in ribosomal large subunit assembly. The chain is Ribosome production factor 2 homolog from Chaetomium thermophilum (strain DSM 1495 / CBS 144.50 / IMI 039719) (Thermochaetoides thermophila).